Reading from the N-terminus, the 126-residue chain is Hydrogenase maturation factor HypA (126 aa).

Ni(2+) is bound at residue H2. The Zn(2+) site is built by C78, C81, C97, and C100.

This sequence belongs to the HypA/HybF family.

Functionally, involved in the maturation of [NiFe] hydrogenases. Required for nickel insertion into the metal center of the hydrogenase. This is Hydrogenase maturation factor HypA from Methanococcus maripaludis (strain C7 / ATCC BAA-1331).